A 122-amino-acid polypeptide reads, in one-letter code: Basic phospholipase A2 Cdr-13 (122 aa).

Cystine bridges form between Cys26/Cys115, Cys28/Cys44, Cys43/Cys95, Cys49/Cys122, Cys50/Cys88, Cys57/Cys81, and Cys75/Cys86. Ca(2+)-binding residues include Tyr27, Gly29, and Gly31. Residue His47 is part of the active site. Ca(2+) is bound at residue Asp48. The active site involves Asp89.

Ca(2+) is required as a cofactor. Expressed by the venom gland.

The protein localises to the secreted. It carries out the reaction a 1,2-diacyl-sn-glycero-3-phosphocholine + H2O = a 1-acyl-sn-glycero-3-phosphocholine + a fatty acid + H(+). Functionally, snake venom phospholipase A2 (PLA2) that induces myonecrosis and edema upon subcutaneous injections in mice. In vitro, causes a potent blockade of neuromuscular transmission in young chicken biventer cervicis preparation and produces cytotoxicity in murine C2C12 skeletal muscle myotubes and lack cytolytic activity upon myoblasts in vitro. PLA2 catalyzes the calcium-dependent hydrolysis of the 2-acyl groups in 3-sn-phosphoglycerides. This is Basic phospholipase A2 Cdr-13 from Crotalus durissus ruruima (South American rattlesnake).